The sequence spans 461 residues: Argininosuccinate lyase (461 aa).

The protein belongs to the lyase 1 family. Argininosuccinate lyase subfamily.

The protein localises to the cytoplasm. The enzyme catalyses 2-(N(omega)-L-arginino)succinate = fumarate + L-arginine. Its pathway is amino-acid biosynthesis; L-arginine biosynthesis; L-arginine from L-ornithine and carbamoyl phosphate: step 3/3. The sequence is that of Argininosuccinate lyase from Limosilactobacillus reuteri subsp. reuteri (strain JCM 1112) (Lactobacillus reuteri).